The following is a 293-amino-acid chain: Calcium uniporter protein 2, mitochondrial (293 aa).

The N-terminal 33 residues, M1–L33, are a transit peptide targeting the mitochondrion. A helical membrane pass occupies residues I168 to F188. A Selectivity filter motif is present at residues W193–F201. E197 lines the Ca(2+) pocket. The helical transmembrane segment at P198 to T218 threads the bilayer.

This sequence belongs to the MCU (TC 1.A.77) family.

The protein localises to the mitochondrion inner membrane. The catalysed reaction is Ca(2+)(in) = Ca(2+)(out). Its function is as follows. Mitochondrial inner membrane calcium uniporter that mediates calcium uptake into mitochondria. Constitutes a pore-forming and calcium-conducting subunit. Mitochondrial calcium homeostasis plays key roles in cellular physiology and regulates cell bioenergetics, cytoplasmic calcium signals and activation of cell death pathways. The polypeptide is Calcium uniporter protein 2, mitochondrial (Arabidopsis thaliana (Mouse-ear cress)).